The sequence spans 89 residues: RNA-binding protein Hfq (89 aa).

The 60-residue stretch at 9–68 (EPFLNALRKEKVPVSIYLVNGIKLQGQIESFDQFVILLRNNVNQMVYKHAISTVVPARNV) folds into the Sm domain. The disordered stretch occupies residues 70-89 (TAPPVPTETHAQSSEEFGNI). Over residues 78–89 (THAQSSEEFGNI) the composition is skewed to polar residues.

This sequence belongs to the Hfq family. Homohexamer.

Its function is as follows. RNA chaperone that binds small regulatory RNA (sRNAs) and mRNAs to facilitate mRNA translational regulation in response to envelope stress, environmental stress and changes in metabolite concentrations. Also binds with high specificity to tRNAs. The sequence is that of RNA-binding protein Hfq from Alkalilimnicola ehrlichii (strain ATCC BAA-1101 / DSM 17681 / MLHE-1).